The primary structure comprises 250 residues: Membrane-spanning 4-domains subfamily A member 8 (250 aa).

Over 1–74 the chain is Cytoplasmic; that stretch reads MNSMTSAVPV…ALKEGKTLGA (74 aa). The helical transmembrane segment at 75-95 threads the bilayer; it reads IQIIIGLAHIGLGSIMATVLV. The Extracellular portion of the chain corresponds to 96–98; it reads GEY. A helical membrane pass occupies residues 99-119; that stretch reads LSISFYGGFPFWGGLWFIISG. The Cytoplasmic portion of the chain corresponds to 120–136; the sequence is SLSVAAENQPYSYCLLS. The chain crosses the membrane as a helical span at residues 137–157; the sequence is GSLGLNIVSAICSAVGVILFI. At 158 to 180 the chain is on the extracellular side; it reads TDLSIPHPYAYPDYYPYAWGVNP. The chain crosses the membrane as a helical span at residues 181 to 201; that stretch reads GMAISGVLLVFCLLEFGIACA. Over 202–250 the chain is Cytoplasmic; the sequence is SSHFGCQLVCCQSSNVSVIYPNIYAANPVITPEPVTSPPSYSSEIQANK.

The protein belongs to the MS4A family. Expressed by hematopoietic tissues and cells lines.

The protein localises to the membrane. Functionally, may be involved in signal transduction as a component of a multimeric receptor complex. This is Membrane-spanning 4-domains subfamily A member 8 (MS4A8) from Homo sapiens (Human).